The sequence spans 247 residues: Disease resistance protein BAK6 (247 aa).

A signal peptide spans 1–24; sequence MAAVQFAAAGVLTGLLALATLASC. Asparagine 66, asparagine 104, and asparagine 113 each carry an N-linked (GlcNAc...) asparagine glycan. LRR repeat units follow at residues 90–114, 116–138, 139–161, 162–186, 188–210, and 213–237; these read LESL…LGNL, DLIS…LGSI, STLR…SFGN, LTSL…LGNI, SLQF…VLSL, and VGNL…GLRV. N-linked (GlcNAc...) asparagine glycans are attached at residues asparagine 150 and asparagine 161. The N-linked (GlcNAc...) asparagine glycan is linked to asparagine 215.

As to quaternary structure, interacts with WAK17 isoform 1; the interaction is direct. In terms of assembly, (Microbial infection) Interacts with G.zeae CFEM1; the interaction is direct. Interacts with G.zeae CFEMN1; the interaction is direct. Interacts with G.zeae CFEM5; the interaction is direct.

Contributes to activation of the hypersensitive response, a form of programmed cell death, upon fungal infection. May sense the presence of fungal material and relay the signal to WAK17 isoform 1. This chain is Disease resistance protein BAK6, found in Zea mays (Maize).